Here is a 156-residue protein sequence, read N- to C-terminus: Transcription inhibitor protein Gfh1 (156 aa).

A coiled-coil region spans residues 1-74; that stretch reads MAREVKLTKA…LEDILSRAVI (74 aa).

This sequence belongs to the GreA/GreB family. In terms of assembly, interacts with RNAP.

Functionally, inhibits all catalytic activities of RNA polymerase (RNAP) by partially occluding its substrate-binding site and preventing NTP binding. This chain is Transcription inhibitor protein Gfh1 (gfh1), found in Thermus thermophilus (strain ATCC BAA-163 / DSM 7039 / HB27).